The sequence spans 555 residues: Hydroxylamine reductase (555 aa).

[4Fe-4S] cluster contacts are provided by cysteine 3, cysteine 6, cysteine 18, and cysteine 25. Hybrid [4Fe-2O-2S] cluster contacts are provided by histidine 252, glutamate 276, cysteine 320, cysteine 407, cysteine 435, cysteine 460, glutamate 494, and lysine 496. Cysteine 407 is modified (cysteine persulfide).

The protein belongs to the HCP family. [4Fe-4S] cluster is required as a cofactor. The cofactor is hybrid [4Fe-2O-2S] cluster.

The protein localises to the cytoplasm. The enzyme catalyses A + NH4(+) + H2O = hydroxylamine + AH2 + H(+). Catalyzes the reduction of hydroxylamine to form NH(3) and H(2)O. This Burkholderia lata (strain ATCC 17760 / DSM 23089 / LMG 22485 / NCIMB 9086 / R18194 / 383) protein is Hydroxylamine reductase.